Consider the following 329-residue polypeptide: Ketol-acid reductoisomerase (NADP(+)) (329 aa).

Residues 2–182 form the KARI N-terminal Rossmann domain; that stretch reads TQLFYDTDAD…GGTRAGILET (181 aa). NADP(+) contacts are provided by residues 25-28, Ser51, Ser53, and 83-86; these read YGSQ and DEFQ. His108 is an active-site residue. Gly134 provides a ligand contact to NADP(+). In terms of domain architecture, KARI C-terminal knotted spans 183 to 328; the sequence is NFKEETETDL…KGLRAMFSWL (146 aa). Positions 191, 195, 227, and 231 each coordinate Mg(2+). Ser252 contacts substrate.

The protein belongs to the ketol-acid reductoisomerase family. The cofactor is Mg(2+).

The catalysed reaction is (2R)-2,3-dihydroxy-3-methylbutanoate + NADP(+) = (2S)-2-acetolactate + NADPH + H(+). It carries out the reaction (2R,3R)-2,3-dihydroxy-3-methylpentanoate + NADP(+) = (S)-2-ethyl-2-hydroxy-3-oxobutanoate + NADPH + H(+). It participates in amino-acid biosynthesis; L-isoleucine biosynthesis; L-isoleucine from 2-oxobutanoate: step 2/4. The protein operates within amino-acid biosynthesis; L-valine biosynthesis; L-valine from pyruvate: step 2/4. In terms of biological role, involved in the biosynthesis of branched-chain amino acids (BCAA). Catalyzes an alkyl-migration followed by a ketol-acid reduction of (S)-2-acetolactate (S2AL) to yield (R)-2,3-dihydroxy-isovalerate. In the isomerase reaction, S2AL is rearranged via a Mg-dependent methyl migration to produce 3-hydroxy-3-methyl-2-ketobutyrate (HMKB). In the reductase reaction, this 2-ketoacid undergoes a metal-dependent reduction by NADPH to yield (R)-2,3-dihydroxy-isovalerate. The polypeptide is Ketol-acid reductoisomerase (NADP(+)) (Prochlorococcus marinus subsp. pastoris (strain CCMP1986 / NIES-2087 / MED4)).